A 549-amino-acid chain; its full sequence is Alpha-amylase (549 aa).

Positions 1–34 (MLTFHRIIRKGWMFLLAFLLTALLFCPTGQPAKA) are cleaved as a signal peptide. The Ca(2+) site is built by D139, D196, A218, D220, D231, and D237. A Na(+)-binding site is contributed by D196. D220, D231, D237, and L238 together coordinate Na(+). Ca(2+) is bound at residue D239. Residue D268 is the Nucleophile of the active site. H272 contributes to the Ca(2+) binding site. E298 serves as the catalytic Proton donor. Positions 337, 339, 440, 441, and 464 each coordinate Ca(2+).

Belongs to the glycosyl hydrolase 13 family. Monomer. Requires Ca(2+) as cofactor. It depends on Na(+) as a cofactor.

The protein localises to the secreted. The catalysed reaction is Endohydrolysis of (1-&gt;4)-alpha-D-glucosidic linkages in polysaccharides containing three or more (1-&gt;4)-alpha-linked D-glucose units.. This chain is Alpha-amylase (amyS), found in Geobacillus stearothermophilus (Bacillus stearothermophilus).